A 628-amino-acid chain; its full sequence is E3 SUMO-protein ligase PIAS3 (628 aa).

Positions 1–200 (MAELGELKHM…QLRFCLCETS (200 aa)) are interaction with CCAR2. Residues 11–45 (VMSFRVSELQVLLGFAGRNKSGRKHELLAKALHLL) form the SAP domain. The short motif at 19–23 (LQVLL) is the LXXLL motif element. Residues Lys46, Lys56, Lys230, and Lys307 each participate in a glycyl lysine isopeptide (Lys-Gly) (interchain with G-Cter in SUMO2) cross-link. The 166-residue stretch at 115 to 280 (MHPPLPQPVH…SLSVYLVRQL (166 aa)) folds into the PINIT domain. The SP-RING-type zinc finger occupies 312 to 393 (PDSEVATTSL…FMEILSSCSD (82 aa)). Zn(2+)-binding residues include Cys343, His345, Cys366, and Cys369. The tract at residues 450–460 (LTIESSSDEED) is SUMO1-binding. Glycyl lysine isopeptide (Lys-Gly) (interchain with G-Cter in SUMO2) cross-links involve residues Lys466 and Lys482. The disordered stretch occupies residues 597-617 (VAPGGALREGHGGPLPSGPSL).

This sequence belongs to the PIAS family. As to quaternary structure, monomer. Binds SUMO1 and UBE2I. Interacts with BCL11A, HMGA2, IRF1, MITF and NCOA2. Interacts with STAT5; the interaction occurs on stimulation by PRL. Interacts with GFI1; the interaction relieves the inhibitory effect of PIAS3 on STAT3-mediated transcriptional activity. Interacts with AR, PLAG1 and ZFHX3. Interacts with STAT3; the interaction occurs on stimulation by IL6, CNTF or OSM and inhibits the DNA binding activity of STAT3. Interacts with MTA1. Interacts with CCAR2 (via N-terminus). Interacts with TRIM8. Interacts with PRDM1/Blimp-1. Sumoylated. Widely expressed.

The protein resides in the cytoplasm. The protein localises to the nucleus. It localises to the nucleus speckle. It participates in protein modification; protein sumoylation. Functionally, functions as an E3-type small ubiquitin-like modifier (SUMO) ligase, stabilizing the interaction between UBE2I and the substrate, and as a SUMO-tethering factor. Plays a crucial role as a transcriptional coregulation in various cellular pathways, including the STAT pathway and the steroid hormone signaling pathway. Involved in regulating STAT3 signaling via inhibiting STAT3 DNA-binding and suppressing cell growth. Enhances the sumoylation of MTA1 and may participate in its paralog-selective sumoylation. Sumoylates CCAR2 which promotes its interaction with SIRT1. Diminishes the sumoylation of ZFHX3 by preventing the colocalization of ZFHX3 with SUMO1 in the nucleus. The chain is E3 SUMO-protein ligase PIAS3 (PIAS3) from Homo sapiens (Human).